Reading from the N-terminus, the 99-residue chain is Putative membrane protein insertion efficiency factor (99 aa).

Belongs to the UPF0161 family.

It localises to the cell membrane. Could be involved in insertion of integral membrane proteins into the membrane. In Corynebacterium glutamicum (strain ATCC 13032 / DSM 20300 / JCM 1318 / BCRC 11384 / CCUG 27702 / LMG 3730 / NBRC 12168 / NCIMB 10025 / NRRL B-2784 / 534), this protein is Putative membrane protein insertion efficiency factor.